Reading from the N-terminus, the 143-residue chain is Ribosome maturation factor RimP (143 aa).

It belongs to the RimP family.

It is found in the cytoplasm. In terms of biological role, required for maturation of 30S ribosomal subunits. The sequence is that of Ribosome maturation factor RimP from Nitrosomonas eutropha (strain DSM 101675 / C91 / Nm57).